Here is a 55-residue protein sequence, read N- to C-terminus: Large ribosomal subunit protein bL33 (55 aa).

This sequence belongs to the bacterial ribosomal protein bL33 family.

This is Large ribosomal subunit protein bL33 from Cereibacter sphaeroides (strain ATCC 17029 / ATH 2.4.9) (Rhodobacter sphaeroides).